The primary structure comprises 244 residues: Eukaryotic translation initiation factor 4E type 1B (244 aa).

The span at 1–26 (MNKVEGGGHKEEVVVKEKEVVKEKPS) shows a compositional bias: basic and acidic residues. The segment at 1-57 (MNKVEGGGHKEEVVVKEKEVVKEKPSEATAEGVQAGEAKDLPGSLKTQRRKAHREHP) is disordered. Positions 65 to 68 (HPLQ) are EIF4EBP1/2/3 binding. 84 to 85 (WQ) contributes to the mRNA binding site. The EIF4EBP1/2/3 binding stretch occupies residues 101–105 (WAVYS). 130–131 (WE) provides a ligand contact to mRNA. Residues 160–167 (ETLLCLVG) are EIF4EBP1/2/3 binding. MRNA-binding positions include 185-190 (RTKRDK) and 233-235 (AKS).

Belongs to the eukaryotic initiation factor 4E family. EIF4F is a multi-subunit complex, the composition of which varies with external and internal environmental conditions. It is composed of at least EIF4A, EIF4E and EIF4G.

Functionally, recognizes and binds the 7-methylguanosine-containing mRNA cap during an early step in the initiation of protein synthesis and facilitates ribosome binding by inducing the unwinding of the mRNAs secondary structures. This chain is Eukaryotic translation initiation factor 4E type 1B (Eif4e1b), found in Mus musculus (Mouse).